A 776-amino-acid polypeptide reads, in one-letter code: Calcium-independent phospholipase A2-gamma (776 aa).

Asn-4 and Asn-157 each carry an N-linked (GlcNAc...) asparagine glycan. Disordered regions lie at residues 216 to 276 and 306 to 334; these read KGKM…HPVS and KLKS…DKKA. Composition is skewed to basic and acidic residues over residues 221-239 and 247-263; these read QTKE…ERKS and VADR…KDKL. The 196-residue stretch at 439–634 folds into the PNPLA domain; it reads LTIDGGGTRG…LLNNPSALAL (196 aa). Residues 443 to 448 carry the GXGXXG motif; the sequence is GGGTRG. A helical membrane pass occupies residues 469 to 489; sequence LFDYICGVSTGAILAFMLGLF. The short motif at 475–479 is the GXSXG element; the sequence is GVSTG. Catalysis depends on Ser-477, which acts as the Nucleophile. The Proton acceptor role is filled by Asp-621. Positions 621–623 match the DGA/G motif; that stretch reads DGG. Residue Lys-730 is modified to N6-succinyllysine.

As to expression, expressed in myocardium (at protein level).

Its subcellular location is the endoplasmic reticulum membrane. The protein localises to the mitochondrion membrane. It localises to the peroxisome membrane. The catalysed reaction is a 1,2-diacyl-sn-glycero-3-phosphocholine + H2O = a 1-acyl-sn-glycero-3-phosphocholine + a fatty acid + H(+). It catalyses the reaction a 1,2-diacyl-sn-glycero-3-phosphocholine + H2O = a 2-acyl-sn-glycero-3-phosphocholine + a fatty acid + H(+). The enzyme catalyses a 1,2-diacyl-sn-glycero-3-phosphoethanolamine + H2O = a 1-acyl-sn-glycero-3-phosphoethanolamine + a fatty acid + H(+). It carries out the reaction a 1-O-(1Z-alkenyl)-2-acyl-sn-glycero-3-phosphocholine + H2O = a 1-O-(1Z-alkenyl)-sn-glycero-3-phosphocholine + a fatty acid + H(+). The catalysed reaction is a 1-acyl-sn-glycero-3-phosphocholine + H2O = sn-glycerol 3-phosphocholine + a fatty acid + H(+). It catalyses the reaction 1-hexadecanoyl-2-(5Z,8Z,11Z,14Z-eicosatetraenoyl)-sn-glycero-3-phosphocholine + H2O = 2-(5Z,8Z,11Z,14Z)-eicosatetraenoyl-sn-glycero-3-phosphocholine + hexadecanoate + H(+). The enzyme catalyses 1-acyl-2-(9Z,12Z)-octadecadienoyl-sn-glycero-3-phosphocholine + H2O = a 1-acyl-sn-glycero-3-phosphocholine + (9Z,12Z)-octadecadienoate + H(+). It carries out the reaction 1-acyl-2-(5Z,8Z,11Z,14Z-eicosatetraenoyl)-sn-glycero-3-phosphocholine + H2O = a 1-acyl-sn-glycero-3-phosphocholine + (5Z,8Z,11Z,14Z)-eicosatetraenoate + H(+). The catalysed reaction is 1-hexadecanoyl-2-(5Z,8Z,11Z,14Z-eicosatetraenoyl)-sn-glycero-3-phosphocholine + H2O = 1-hexadecanoyl-sn-glycero-3-phosphocholine + (5Z,8Z,11Z,14Z)-eicosatetraenoate + H(+). It catalyses the reaction 1-octadecanoyl-2-(9Z-octadecenoyl)-sn-glycero-3-phosphocholine + H2O = 1-octadecanoyl-sn-glycero-3-phosphocholine + (9Z)-octadecenoate + H(+). The enzyme catalyses 1-hexadecanoyl-2-(9Z-octadecenoyl)-sn-glycero-3-phosphocholine + H2O = 1-hexadecanoyl-sn-glycero-3-phosphocholine + (9Z)-octadecenoate + H(+). It carries out the reaction 1-hexadecanoyl-2-(9Z,12Z-octadecadienoyl)-sn-glycero-3-phosphocholine + H2O = (9Z,12Z)-octadecadienoate + 1-hexadecanoyl-sn-glycero-3-phosphocholine + H(+). The catalysed reaction is 1-acyl-2-(9Z,12Z)-octadecadienoyl-sn-glycero-3-phosphoethanolamine + H2O = a 1-acyl-sn-glycero-3-phosphoethanolamine + (9Z,12Z)-octadecadienoate + H(+). It catalyses the reaction 1-acyl-2-(5Z,8Z,11Z,14Z)-eicosatetraenoyl-sn-glycero-3-phosphoethanolamine + H2O = a 1-acyl-sn-glycero-3-phosphoethanolamine + (5Z,8Z,11Z,14Z)-eicosatetraenoate + H(+). The enzyme catalyses 1-hexadecanoyl-2-(5Z,8Z,11Z,14Z-eicosatetraenoyl)-sn-glycero-3-phosphoethanolamine + H2O = 1-hexadecanoyl-sn-glycero-3-phosphoethanolamine + (5Z,8Z,11Z,14Z)-eicosatetraenoate + H(+). It carries out the reaction 1-octadecanoyl-2-(9Z-octadecenoyl)-sn-glycero-3-phosphocholine + H2O = 2-(9Z-octadecenoyl)-sn-glycero-3-phosphocholine + octadecanoate + H(+). The catalysed reaction is 1-hexadecanoyl-2-(4Z,7Z,10Z,13Z,16Z,19Z-docosahexaenoyl)-sn-glycero-3-phosphocholine + H2O = 2-(4Z,7Z,10Z,13Z,16Z,19Z-docosahexaenoyl)-sn-glycero-3-phosphocholine + hexadecanoate + H(+). It catalyses the reaction 1-O-(1Z)-hexadecenyl-2 (5Z,8Z,11Z,14Z)-eicosatetraenoyl-sn-glycero-3-phosphocholine + H2O = 1-(1Z-hexadecenyl)-sn-glycero-3-phosphocholine + (5Z,8Z,11Z,14Z)-eicosatetraenoate + H(+). The enzyme catalyses 1-O-(1Z-hexadecenyl)-2-(9Z-octadecenoyl)-sn-glycero-3-phosphocholine + H2O = 1-(1Z-hexadecenyl)-sn-glycero-3-phosphocholine + (9Z)-octadecenoate + H(+). It carries out the reaction 1-hexadecanoyl-sn-glycero-3-phosphocholine + H2O = sn-glycerol 3-phosphocholine + hexadecanoate + H(+). The catalysed reaction is 1',3'-bis-[1,2-di-(9Z,12Z-octadecadienoyl)-sn-glycero-3-phospho]-glycerol + H2O = 1'-[1,2-di-(9Z,12Z-octadecadienoyl)-sn-glycero-3-phospho]-3'-[1-(9Z,12Z-octadecadienoyl)-sn-glycero-3-phospho]-glycerol + (9Z,12Z)-octadecadienoate + H(+). It catalyses the reaction 1'-[1-acyl-2-(9-hydroxy-(10E,12Z)-octadecadienoyl)-sn-glycero-3-phospho]-3'-[1,2-diacyl-sn-glycero-3-phospho]-glycerol + H2O = 9-hydroxy-(10E,12Z)-octadecadienoate + 1'-[1,2-diacyl-sn-glycero-3-phospho],3'-[1-acyl-sn-glycero-3-phospho]-glycerol + H(+). The protein operates within phospholipid metabolism. Its activity is regulated as follows. Calcium-independent phospholipase. Calcium-independent and membrane-bound phospholipase, that catalyzes the esterolytic cleavage of fatty acids from glycerophospholipids to yield free fatty acids and lysophospholipids, hence regulating membrane physical properties and the release of lipid second messengers and growth factors. Hydrolyzes phosphatidylethanolamine, phosphatidylcholine and probably phosphatidylinositol with a possible preference for the former. Also has a broad substrate specificity in terms of fatty acid moieties, hydrolyzing saturated and mono-unsaturated fatty acids at nearly equal rates from either the sn-1 or sn-2 position in diacyl phosphatidylcholine. However, has a weak activity toward polyunsaturated fatty acids at the sn-2 position, and thereby favors the production of 2-arachidonoyl lysophosphatidylcholine, a key branch point metabolite in eicosanoid signaling. On the other hand, can produce arachidonic acid from the sn-1 position of diacyl phospholipid and from the sn-2 position of arachidonate-containing plasmalogen substrates. Therefore, plays an important role in the mobilization of arachidonic acid in response to cellular stimuli and the generation of lipid second messengers. Can also hydrolyze lysophosphatidylcholine. In the mitochondrial compartment, catalyzes the hydrolysis and release of oxidized aliphatic chains from cardiolipin and integrates mitochondrial bioenergetics and signaling. It is essential for maintaining efficient bioenergetic mitochondrial function through tailoring mitochondrial membrane lipid metabolism and composition. The chain is Calcium-independent phospholipase A2-gamma from Mus musculus (Mouse).